A 248-amino-acid polypeptide reads, in one-letter code: Triosephosphate isomerase (248 aa).

The substrate site is built by asparagine 10 and lysine 12. Histidine 95 acts as the Electrophile in catalysis. Glutamate 165 (proton acceptor) is an active-site residue.

Belongs to the triosephosphate isomerase family. As to quaternary structure, homodimer.

It carries out the reaction D-glyceraldehyde 3-phosphate = dihydroxyacetone phosphate. It functions in the pathway carbohydrate biosynthesis; gluconeogenesis. It participates in carbohydrate degradation; glycolysis; D-glyceraldehyde 3-phosphate from glycerone phosphate: step 1/1. This is Triosephosphate isomerase (tpi-1) from Neurospora crassa (strain ATCC 24698 / 74-OR23-1A / CBS 708.71 / DSM 1257 / FGSC 987).